Consider the following 256-residue polypeptide: Alcohol dehydrogenase (256 aa).

12–35 (FVAGLGGIGLDTSKELVKRDLKNL) contacts NAD(+). Ser-140 is a binding site for substrate. Tyr-153 functions as the Proton acceptor in the catalytic mechanism.

The protein belongs to the short-chain dehydrogenases/reductases (SDR) family. As to quaternary structure, homodimer.

The catalysed reaction is a primary alcohol + NAD(+) = an aldehyde + NADH + H(+). It catalyses the reaction a secondary alcohol + NAD(+) = a ketone + NADH + H(+). This Drosophila orena (Fruit fly) protein is Alcohol dehydrogenase (Adh).